The following is a 318-amino-acid chain: Tyrosine--tRNA ligase (318 aa).

Tyr35 is an L-tyrosine binding site. A 'HIGH' region motif is present at residues 40–48 (PSGKVHLGH). The L-tyrosine site is built by Tyr154, Gln158, Asp161, and Gln176. Residues 211–215 (KMSSS) carry the 'KMSKS' region motif. Ser214 provides a ligand contact to ATP.

It belongs to the class-I aminoacyl-tRNA synthetase family. TyrS type 3 subfamily. As to quaternary structure, homodimer.

The protein localises to the cytoplasm. The enzyme catalyses tRNA(Tyr) + L-tyrosine + ATP = L-tyrosyl-tRNA(Tyr) + AMP + diphosphate + H(+). Its function is as follows. Catalyzes the attachment of tyrosine to tRNA(Tyr) in a two-step reaction: tyrosine is first activated by ATP to form Tyr-AMP and then transferred to the acceptor end of tRNA(Tyr). The sequence is that of Tyrosine--tRNA ligase from Methanosphaera stadtmanae (strain ATCC 43021 / DSM 3091 / JCM 11832 / MCB-3).